We begin with the raw amino-acid sequence, 28 residues long: Sarcolamban A (28 aa).

A helical membrane pass occupies residues 7–27 (LFTTFGILAILLFFLYLIYAV).

Interacts with SERCA. As to expression, strongly expressed in embryonic and larval somatic muscles and postembryonic heart.

The protein localises to the sarcoplasmic reticulum membrane. Its subcellular location is the cell membrane. It localises to the sarcolemma. The protein resides in the T-tubule. Its function is as follows. Plays an essential role in the regulation of calcium transport at the sarcoplasmic reticulum (SR), which is secondarily required for regular muscle contraction. The protein is Sarcolamban A of Drosophila melanogaster (Fruit fly).